The primary structure comprises 164 residues: Phosphopantetheine adenylyltransferase (164 aa).

Residue Ser-9 participates in substrate binding. ATP contacts are provided by residues 9–10 (SF) and His-17. Lys-41, Val-78, and Arg-92 together coordinate substrate. ATP contacts are provided by residues 93–95 (GLR), Glu-103, and 128–134 (SRPITAT).

It belongs to the bacterial CoaD family. As to quaternary structure, homohexamer. The cofactor is Mg(2+).

The protein resides in the cytoplasm. It catalyses the reaction (R)-4'-phosphopantetheine + ATP + H(+) = 3'-dephospho-CoA + diphosphate. It participates in cofactor biosynthesis; coenzyme A biosynthesis; CoA from (R)-pantothenate: step 4/5. Functionally, reversibly transfers an adenylyl group from ATP to 4'-phosphopantetheine, yielding dephospho-CoA (dPCoA) and pyrophosphate. This chain is Phosphopantetheine adenylyltransferase, found in Rhizobium leguminosarum bv. trifolii (strain WSM2304).